Reading from the N-terminus, the 122-residue chain is uncharacterized protein (122 aa).

An N-terminal signal peptide occupies residues 1 to 35 (MCCYVGKATKIFLCLAAALIVVGLVLGFGLAHRTW). Residues 55-83 (YGGGGGGGDPLPATSGAGDTPPGVPLTEP) form a disordered region.

This is an uncharacterized protein from Oryza sativa subsp. japonica (Rice).